The primary structure comprises 195 residues: UPF0157 protein BH1888 (195 aa).

Over residues 1 to 12 (MPPMKDSSNSTP) the composition is skewed to polar residues. The segment at 1 to 21 (MPPMKDSSNSTPRTDEELQEV) is disordered.

Belongs to the UPF0157 (GrpB) family.

The sequence is that of UPF0157 protein BH1888 from Halalkalibacterium halodurans (strain ATCC BAA-125 / DSM 18197 / FERM 7344 / JCM 9153 / C-125) (Bacillus halodurans).